The chain runs to 240 residues: Sialidase 85-1.2 (240 aa).

Residues Asp-127–Glu-142 show a composition bias toward acidic residues. Disordered stretches follow at residues Asp-127–Pro-158 and His-221–Ala-240. Positions Ser-144 to Gly-155 are enriched in basic and acidic residues.

The protein belongs to the glycosyl hydrolase 33 family.

The enzyme catalyses Hydrolysis of alpha-(2-&gt;3)-, alpha-(2-&gt;6)-, alpha-(2-&gt;8)- glycosidic linkages of terminal sialic acid residues in oligosaccharides, glycoproteins, glycolipids, colominic acid and synthetic substrates.. In terms of biological role, developmentally regulated neuraminidase implicated in parasite invasion of cells. May contribute to the pathology during T.cruzi infection by cleaving sialic acid from cells of the immune system. This is Sialidase 85-1.2 (SA85-1.2) from Trypanosoma cruzi.